Consider the following 406-residue polypeptide: Dual-specificity RNA methyltransferase RlmN (406 aa).

Glutamate 119 (proton acceptor) is an active-site residue. Residues 125–370 (DKGRGTLCVS…AMVRRTRGDD (246 aa)) form the Radical SAM core domain. A disulfide bridge connects residues cysteine 132 and cysteine 375. Cysteine 139, cysteine 143, and cysteine 146 together coordinate [4Fe-4S] cluster. S-adenosyl-L-methionine-binding positions include 192–193 (GE), serine 224, 246–248 (SLH), and asparagine 332. Catalysis depends on cysteine 375, which acts as the S-methylcysteine intermediate.

The protein belongs to the radical SAM superfamily. RlmN family. [4Fe-4S] cluster serves as cofactor.

The protein localises to the cytoplasm. It carries out the reaction adenosine(2503) in 23S rRNA + 2 reduced [2Fe-2S]-[ferredoxin] + 2 S-adenosyl-L-methionine = 2-methyladenosine(2503) in 23S rRNA + 5'-deoxyadenosine + L-methionine + 2 oxidized [2Fe-2S]-[ferredoxin] + S-adenosyl-L-homocysteine. The catalysed reaction is adenosine(37) in tRNA + 2 reduced [2Fe-2S]-[ferredoxin] + 2 S-adenosyl-L-methionine = 2-methyladenosine(37) in tRNA + 5'-deoxyadenosine + L-methionine + 2 oxidized [2Fe-2S]-[ferredoxin] + S-adenosyl-L-homocysteine. Functionally, specifically methylates position 2 of adenine 2503 in 23S rRNA and position 2 of adenine 37 in tRNAs. m2A2503 modification seems to play a crucial role in the proofreading step occurring at the peptidyl transferase center and thus would serve to optimize ribosomal fidelity. The sequence is that of Dual-specificity RNA methyltransferase RlmN from Xylella fastidiosa (strain Temecula1 / ATCC 700964).